A 648-amino-acid polypeptide reads, in one-letter code: Actin-related protein 5 (648 aa).

Positions 34–59 (LTKPRKDRKKEAAASEGSASQTTVEQ) are disordered. 2 coiled-coil regions span residues 277 to 311 (TAEQ…EQQL) and 340 to 364 (TLED…RAQS). Disordered regions lie at residues 357-385 (RAQE…PEGM) and 403-455 (GRKQ…GMND). Positions 414 to 428 (EQAKRHTHAAQERMR) are enriched in basic and acidic residues. Residues serine 471 and serine 473 each carry the phosphoserine modification.

Belongs to the actin family. ARP5 subfamily. Component of the chromatin remodeling Ino80 complex.

The protein resides in the nucleus. Proposed core component of the chromatin remodeling Ino80 complex which is involved in transcriptional regulation, DNA replication and probably DNA repair. The polypeptide is Actin-related protein 5 (Drosophila melanogaster (Fruit fly)).